The sequence spans 266 residues: Early E1A protein (266 aa).

The segment at 39 to 47 (PSLYELYDL) is interaction with RB1 in competition with E2F1. Residues 75–145 (EGLFLPEPPV…AAAAADRERE (71 aa)) are interaction with UBE2I. The PXLXP motif, interaction with host ZMYND11 signature appears at 98 to 102 (PQLHP). Residues 107 to 111 (LLCYE) carry the LXCXE motif, interaction with host RB1 and TMEM173/STING motif. A zinc finger spans residues 159–179 (CKSCEHHRNSTGNTDLMCSLC). Residues 195 to 226 (NEPEPNSTLDGDERPSPPKLGSAVPEGVIKPV) are disordered. The PXDLS motif, CTBP-binding signature appears at 255 to 259 (PVDLS). Residues 261–265 (KRPRC) carry the Nuclear localization signal motif.

This sequence belongs to the adenoviridae E1A protein family. As to quaternary structure, interacts with host UBE2I; this interaction interferes with polySUMOylation. Interacts with host RB1; this interaction induces the aberrant dissociation of RB1-E2F1 complex thereby disrupting the activity of RB1 and activating E2F1-regulated genes. Interacts with host ATF7; the interaction enhances ATF7-mediated viral transactivation activity which requires the zinc binding domains of both proteins. Isoform early E1A 32 kDa protein and isoform early E1A 26 kDa protein interact (via N-terminus) with CUL1 and E3 ubiquitin ligase RBX1; these interactions inhibit RBX1-CUL1-dependent elongation reaction of ubiquitin chains and attenuate ubiquitination of SCF(FBXW7) target proteins. Interacts (via PXLXP motif) with host ZMYND11/BS69 (via MYND-type zinc finger); this interaction inhibits E1A mediated transactivation. Interacts with host EP300; this interaction stimulates the acetylation of RB1 by recruiting EP300 and RB1 into a multimeric-protein complex. Interacts with host CTBP1 and CTBP2; this interaction seems to potentiate viral replication. Interacts with host DCAF7. Interacts with host DYRK1A. Interacts with host KPNA4; this interaction allows E1A import into the host nucleus. Interacts with host EP400; this interaction stabilizes MYC. Interacts with host TBP protein; this interaction probably disrupts the TBP-TATA complex. Interacts (via LXCXE motif) with host TMEM173/STING; this interaction impairs the ability of TMEM173/STING to sense cytosolic DNA and promote the production of type I interferon (IFN-alpha and IFN-beta). Interacts (via C-terminus) with host ZBED1/hDREF (via C-terminus); the interaction is direct.

It localises to the host nucleus. Plays a role in viral genome replication by driving entry of quiescent cells into the cell cycle. Stimulation of progression from G1 to S phase allows the virus to efficiently use the cellular DNA replicating machinery to achieve viral genome replication. E1A protein has both transforming and trans-activating activities. Induces the disassembly of the E2F1 transcription factor from RB1 by direct competition for the same binding site on RB1, with subsequent transcriptional activation of E2F1-regulated S-phase genes and of the E2 region of the adenoviral genome. Release of E2F1 leads to the ARF-mediated inhibition of MDM2 and causes TP53/p53 to accumulate because it is not targeted for degradation by MDM2-mediated ubiquitination anymore. This increase in TP53, in turn, would arrest the cell proliferation and direct its death but this effect is counteracted by the viral protein E1B-55K. Inactivation of the ability of RB1 to arrest the cell cycle is critical for cellular transformation, uncontrolled cellular growth and proliferation induced by viral infection. Interaction with RBX1 and CUL1 inhibits ubiquitination of the proteins targeted by SCF(FBXW7) ubiquitin ligase complex, and may be linked to unregulated host cell proliferation. The tumorigenesis-restraining activity of E1A may be related to the disruption of the host CtBP-CtIP complex through the CtBP binding motif. Interaction with host TMEM173/STING impairs the ability of TMEM173/STING to sense cytosolic DNA and promote the production of type I interferon (IFN-alpha and IFN-beta). Promotes the sumoylation of host ZBED1/hDREF with SUMO1. This chain is Early E1A protein, found in Homo sapiens (Human).